A 221-amino-acid polypeptide reads, in one-letter code: Thymine/uracil-DNA glycosylase (221 aa).

A HhH domain is found at 105-133 (DYGGRVPRNRKAILDLPGVGKYTCAAVMC). C197, C204, C207, and C213 together coordinate [4Fe-4S] cluster.

The protein belongs to the Nth/MutY family. The cofactor is [4Fe-4S] cluster.

The enzyme catalyses Hydrolyzes mismatched double-stranded DNA and polynucleotides, releasing free thymine.. Functionally, DNA glycosylase that excises thymine from T/G mismatches and uracil from U/G mismatches. Acts as a repair enzyme able to counteract the mutagenic effect of spontaneous hydrolytic deamination of DNA 5-methylcytosine (5-meC) residues that leads to the formation of T/G mismatches. May also repair U/G mismatches arising from hydrolytic deamination of DNA cytosine residues. G/G, A/G, T/C and U/C are minor substrates. This is Thymine/uracil-DNA glycosylase from Methanothermobacter thermautotrophicus (Methanobacterium thermoformicicum).